The chain runs to 499 residues: Aspartyl/glutamyl-tRNA(Asn/Gln) amidotransferase subunit B (499 aa).

The protein belongs to the GatB/GatE family. GatB subfamily. As to quaternary structure, heterotrimer of A, B and C subunits.

It catalyses the reaction L-glutamyl-tRNA(Gln) + L-glutamine + ATP + H2O = L-glutaminyl-tRNA(Gln) + L-glutamate + ADP + phosphate + H(+). The catalysed reaction is L-aspartyl-tRNA(Asn) + L-glutamine + ATP + H2O = L-asparaginyl-tRNA(Asn) + L-glutamate + ADP + phosphate + 2 H(+). Functionally, allows the formation of correctly charged Asn-tRNA(Asn) or Gln-tRNA(Gln) through the transamidation of misacylated Asp-tRNA(Asn) or Glu-tRNA(Gln) in organisms which lack either or both of asparaginyl-tRNA or glutaminyl-tRNA synthetases. The reaction takes place in the presence of glutamine and ATP through an activated phospho-Asp-tRNA(Asn) or phospho-Glu-tRNA(Gln). The chain is Aspartyl/glutamyl-tRNA(Asn/Gln) amidotransferase subunit B from Mesorhizobium japonicum (strain LMG 29417 / CECT 9101 / MAFF 303099) (Mesorhizobium loti (strain MAFF 303099)).